The chain runs to 475 residues: Methylenetetrahydrofolate--tRNA-(uracil-5-)-methyltransferase TrmFO (475 aa).

Residue 13–18 (GAGLAG) coordinates FAD.

This sequence belongs to the MnmG family. TrmFO subfamily. FAD serves as cofactor.

Its subcellular location is the cytoplasm. The enzyme catalyses uridine(54) in tRNA + (6R)-5,10-methylene-5,6,7,8-tetrahydrofolate + NADH + H(+) = 5-methyluridine(54) in tRNA + (6S)-5,6,7,8-tetrahydrofolate + NAD(+). It catalyses the reaction uridine(54) in tRNA + (6R)-5,10-methylene-5,6,7,8-tetrahydrofolate + NADPH + H(+) = 5-methyluridine(54) in tRNA + (6S)-5,6,7,8-tetrahydrofolate + NADP(+). In terms of biological role, catalyzes the folate-dependent formation of 5-methyl-uridine at position 54 (M-5-U54) in all tRNAs. The protein is Methylenetetrahydrofolate--tRNA-(uracil-5-)-methyltransferase TrmFO of Bradyrhizobium diazoefficiens (strain JCM 10833 / BCRC 13528 / IAM 13628 / NBRC 14792 / USDA 110).